A 189-amino-acid polypeptide reads, in one-letter code: MSNEASPAFESVLTALKAEKVIAYPTEAVFGLGCDPDSEKAVNELLILKKRPWQKGLILIADNYEQLQPYLDDKLLTEEQKKAMFACWPGPVTWVIPAKFSAPKWLTGQFATLAVRVSDHPLVKQLCTFYGKPLVSTSANLNGLEPCRTAEEVRQQFGDKLPILNGDVGGRKNPSEIRDALTGELYRQG.

The YrdC-like domain maps to Ser6–Gly189.

It belongs to the SUA5 family. TsaC subfamily.

It is found in the cytoplasm. It carries out the reaction L-threonine + hydrogencarbonate + ATP = L-threonylcarbamoyladenylate + diphosphate + H2O. In terms of biological role, required for the formation of a threonylcarbamoyl group on adenosine at position 37 (t(6)A37) in tRNAs that read codons beginning with adenine. Catalyzes the conversion of L-threonine, HCO(3)(-)/CO(2) and ATP to give threonylcarbamoyl-AMP (TC-AMP) as the acyladenylate intermediate, with the release of diphosphate. This Photorhabdus laumondii subsp. laumondii (strain DSM 15139 / CIP 105565 / TT01) (Photorhabdus luminescens subsp. laumondii) protein is Threonylcarbamoyl-AMP synthase.